Reading from the N-terminus, the 284-residue chain is 2-dehydro-3-deoxyphosphooctonate aldolase (284 aa).

It belongs to the KdsA family.

The protein resides in the cytoplasm. The catalysed reaction is D-arabinose 5-phosphate + phosphoenolpyruvate + H2O = 3-deoxy-alpha-D-manno-2-octulosonate-8-phosphate + phosphate. It participates in carbohydrate biosynthesis; 3-deoxy-D-manno-octulosonate biosynthesis; 3-deoxy-D-manno-octulosonate from D-ribulose 5-phosphate: step 2/3. The protein operates within bacterial outer membrane biogenesis; lipopolysaccharide biosynthesis. The protein is 2-dehydro-3-deoxyphosphooctonate aldolase of Pectobacterium carotovorum subsp. carotovorum (strain PC1).